The primary structure comprises 60 residues: Large ribosomal subunit protein bL32 (60 aa).

Positions 1–16 are enriched in basic residues; it reads MAVPRRKTSPSRRGMR. A disordered region spans residues 1 to 60; it reads MAVPRRKTSPSRRGMRRSADAIKKPTYVEDKDSGELRRPHHLDLKTGMYKGRQVLKKKDA. The segment covering 17–44 has biased composition (basic and acidic residues); sequence RSADAIKKPTYVEDKDSGELRRPHHLDL.

It belongs to the bacterial ribosomal protein bL32 family.

The sequence is that of Large ribosomal subunit protein bL32 from Bradyrhizobium sp. (strain BTAi1 / ATCC BAA-1182).